The primary structure comprises 220 residues: Deoxyribose-phosphate aldolase (220 aa).

D89 (proton donor/acceptor) is an active-site residue. K151 functions as the Schiff-base intermediate with acetaldehyde in the catalytic mechanism. K180 acts as the Proton donor/acceptor in catalysis.

This sequence belongs to the DeoC/FbaB aldolase family. DeoC type 1 subfamily.

It localises to the cytoplasm. The catalysed reaction is 2-deoxy-D-ribose 5-phosphate = D-glyceraldehyde 3-phosphate + acetaldehyde. Its pathway is carbohydrate degradation; 2-deoxy-D-ribose 1-phosphate degradation; D-glyceraldehyde 3-phosphate and acetaldehyde from 2-deoxy-alpha-D-ribose 1-phosphate: step 2/2. Functionally, catalyzes a reversible aldol reaction between acetaldehyde and D-glyceraldehyde 3-phosphate to generate 2-deoxy-D-ribose 5-phosphate. This is Deoxyribose-phosphate aldolase from Streptococcus pneumoniae (strain Taiwan19F-14).